The chain runs to 360 residues: Phospho-N-acetylmuramoyl-pentapeptide-transferase (360 aa).

The next 10 helical transmembrane spans lie at 26–46 (AILGLLTALIFSLWWGPKLIE), 74–94 (MGGLLILAAIFISVLLWGDLG), 97–117 (YVWVMLFVLGSFGLIGFIDDY), 134–154 (YILQSLAALLIAFFLYATAAN), 168–188 (VMPQLGGVFIVLAYFTIVGSS), 199–219 (GLAIMPTVMVAAAFALIAYLS), 236–256 (SGELVIVCTAIVGAGLGFLWF), 263–283 (VFMGDVGSLSLGAALGAIAVL), 288–308 (ILLVIMGGVFVMETVSVILQV), and 338–358 (VIVRFWIISIFLVLLGLATLK).

Belongs to the glycosyltransferase 4 family. MraY subfamily. Requires Mg(2+) as cofactor.

The protein resides in the cell inner membrane. It catalyses the reaction UDP-N-acetyl-alpha-D-muramoyl-L-alanyl-gamma-D-glutamyl-meso-2,6-diaminopimeloyl-D-alanyl-D-alanine + di-trans,octa-cis-undecaprenyl phosphate = di-trans,octa-cis-undecaprenyl diphospho-N-acetyl-alpha-D-muramoyl-L-alanyl-D-glutamyl-meso-2,6-diaminopimeloyl-D-alanyl-D-alanine + UMP. Its pathway is cell wall biogenesis; peptidoglycan biosynthesis. Functionally, catalyzes the initial step of the lipid cycle reactions in the biosynthesis of the cell wall peptidoglycan: transfers peptidoglycan precursor phospho-MurNAc-pentapeptide from UDP-MurNAc-pentapeptide onto the lipid carrier undecaprenyl phosphate, yielding undecaprenyl-pyrophosphoryl-MurNAc-pentapeptide, known as lipid I. The polypeptide is Phospho-N-acetylmuramoyl-pentapeptide-transferase (Shewanella putrefaciens (strain CN-32 / ATCC BAA-453)).